The chain runs to 75 residues: Tautomerase PptA (75 aa).

Pro2 serves as the catalytic Proton acceptor; via imino nitrogen.

The protein belongs to the 4-oxalocrotonate tautomerase family. PptA subfamily. As to quaternary structure, homodimer.

It localises to the cytoplasm. This Escherichia coli O127:H6 (strain E2348/69 / EPEC) protein is Tautomerase PptA.